The sequence spans 149 residues: Transcriptional repressor NrdR (149 aa).

A zinc finger lies at 3 to 34; it reads CPFCGNLETQVVETRVSEDADFIRRRRQCGAC. The ATP-cone domain occupies 49–139; sequence PAIVKKDGRR…VYRSFEDIDE (91 aa).

It belongs to the NrdR family. It depends on Zn(2+) as a cofactor.

Its function is as follows. Negatively regulates transcription of bacterial ribonucleotide reductase nrd genes and operons by binding to NrdR-boxes. The polypeptide is Transcriptional repressor NrdR (Polaromonas sp. (strain JS666 / ATCC BAA-500)).